The chain runs to 375 residues: Alpha-2,8-sialyltransferase 8B (375 aa).

Topologically, residues 1 to 6 are cytoplasmic; the sequence is MQLQFR. A helical; Signal-anchor for type II membrane protein transmembrane segment spans residues 7 to 23; that stretch reads SWMLAALTLLVVFLIFA. The Lumenal segment spans residues 24-375; the sequence is DISEIEEEIG…LTVGQCDGAT (352 aa). N-linked (GlcNAc...) asparagine glycosylation is found at Asn60, Asn72, Asn89, and Asn134. Intrachain disulfides connect Cys157–Cys307 and Cys171–Cys371. Positions 162 and 185 each coordinate CMP-N-acetyl-beta-neuraminate. Residues Asn219 and Asn234 are each glycosylated (N-linked (GlcNAc...) asparagine). CMP-N-acetyl-beta-neuraminate-binding residues include Thr294, Thr295, Gly296, Trp316, Tyr329, and His330. His346 acts as the Proton donor/acceptor in catalysis.

It belongs to the glycosyltransferase 29 family. Post-translationally, autopolysialylated. Autopolysialylation is not a prerequisite for the polysialylation acitity, but enhances the polysialylation acitity. As to expression, highly expressed in fetal brain, kidney and heart and to a much lesser extent in adult heart and thymus.

It localises to the golgi apparatus membrane. It is found in the secreted. The protein resides in the cell membrane. It carries out the reaction [N-acetyl-alpha-D-neuraminosyl-(2-&gt;8)](n) + CMP-N-acetyl-beta-neuraminate = [N-acetyl-alpha-D-neuraminosyl-(2-&gt;8)](n+1) + CMP + H(+). The protein operates within protein modification; protein glycosylation. In terms of biological role, catalyzes the transfer of a sialic acid from a CMP-linked sialic acid donor onto a terminal alpha-2,3-, alpha-2,6-, or alpha-2,8-linked sialic acid of an N-linked glycan acceptor through alpha-2,8-linkages. Therefore, participates in polysialic acid synthesis on various sialylated N-acetyllactosaminyl oligosaccharides (alpha-2,3-, alpha-2,6-, or alpha-2,8-linked sialic acid), including NCAM1, NCAM1 N-glycans, FETUB N-glycans, and to a lesser extent sialylparagloboside (SPG) and AHSG, which does not require the initial addition of an alpha 2,8-sialic acid. However, does not exhibit sialic acid-polymerase activity. Catalyzes polysialic acid synthesis in the hippocampal on NCAM1 and supports neurite outgrowth. ST8SIA2-mediated polysialylation influences on oligodendrocyte differentiation and may promote the integrity of myelin and axons. The protein is Alpha-2,8-sialyltransferase 8B of Homo sapiens (Human).